The following is a 48-amino-acid chain: Palustrin-3b (48 aa).

A disulfide bond links C43 and C48.

In terms of tissue distribution, expressed by the skin glands.

The protein localises to the secreted. Its function is as follows. Antimicrobial activity against Gram-negative bacterium E.coli. The protein is Palustrin-3b of Lithobates palustris (Pickerel frog).